Consider the following 478-residue polypeptide: Keratin, type II cytoskeletal 8 (478 aa).

The segment at 1-97 is head; that stretch reads MSIRVTQKSY…DPNIQAVRTQ (97 aa). Ser-9 carries the phosphoserine; by PKC/PRKCE modification. Lys-11 is covalently cross-linked (Glycyl lysine isopeptide (Lys-Gly) (interchain with G-Cter in SUMO2)). Ser-13, Ser-15, Ser-21, and Ser-22 each carry phosphoserine. The disordered stretch occupies residues 16–44; sequence APRSFSSRSYTSGPGSRISSSAFSRVGSS. Residue Arg-23 is modified to Omega-N-methylarginine. Position 24 is a phosphoserine; by PKC/PRKCE (Ser-24). Residue Thr-26 is modified to Phosphothreonine. Phosphoserine occurs at positions 27 and 31. Position 32 is an omega-N-methylarginine (Arg-32). A phosphoserine mark is found at Ser-34 and Ser-39. Arg-40 bears the Omega-N-methylarginine mark. Phosphoserine occurs at positions 43 and 44. The residue at position 48 (Arg-48) is an Asymmetric dimethylarginine; alternate. Arg-48 is modified (omega-N-methylarginine; alternate). The residue at position 81 (Ser-81) is a Phosphoserine; by MAPK. Residues 98–133 form a coil 1A region; sequence EKEQIKTLNNKFASFIDKVRHLEQQNKVLETKWNLL. The IF rod domain maps to 98 to 409; sequence EKEQIKTLNN…KLLEGEESRL (312 aa). Lys-108 carries the N6-malonyllysine modification. Residues Lys-129 and Lys-137 each participate in a glycyl lysine isopeptide (Lys-Gly) (interchain with G-Cter in SUMO2) cross-link. The interval 134 to 150 is linker 1; the sequence is QQQKTARSNIDNMFESY. The coil 1B stretch occupies residues 151 to 242; the sequence is INNLRRQLET…QLYEEEIREM (92 aa). A Glycyl lysine isopeptide (Lys-Gly) (interchain with G-Cter in SUMO1); alternate cross-link involves residue Lys-204. Lys-204 is covalently cross-linked (Glycyl lysine isopeptide (Lys-Gly) (interchain with G-Cter in SUMO2); alternate). Lys-214 is modified (N6-acetyllysine). Residue Tyr-235 is modified to Phosphotyrosine. Positions 243–266 are linker 12; sequence QSQISDTSVVLEMDNNRNLDLDGI. Positions 267 to 405 are coil 2; it reads IAEVKAQYEE…ATYRKLLEGE (139 aa). The necessary for interaction with PNN stretch occupies residues 268–389; sequence AEVKAQYEEI…EYQELMNVKL (122 aa). Residue Lys-271 forms a Glycyl lysine isopeptide (Lys-Gly) (interchain with G-Cter in SUMO2) linkage. Ser-281 is subject to Phosphoserine. Lys-292 participates in a covalent cross-link: Glycyl lysine isopeptide (Lys-Gly) (interchain with G-Cter in SUMO2). A Glycyl lysine isopeptide (Lys-Gly) (interchain with G-Cter in SUMO2); alternate cross-link involves residue Lys-302. Position 302 is an N6-acetyllysine; alternate (Lys-302). Lys-311 is covalently cross-linked (Glycyl lysine isopeptide (Lys-Gly) (interchain with G-Cter in SUMO2)). Lys-332 participates in a covalent cross-link: Glycyl lysine isopeptide (Lys-Gly) (interchain with G-Cter in SUMO2); alternate. An N6-acetyllysine; alternate modification is found at Lys-332. At Ser-337 the chain carries Phosphoserine. Lys-400 is covalently cross-linked (Glycyl lysine isopeptide (Lys-Gly) (interchain with G-Cter in SUMO2)). Positions 406-478 are tail; that stretch reads ESRLESGMQN…VSESSDVLSK (73 aa). A phosphoserine mark is found at Ser-407, Ser-411, Ser-417, Ser-424, and Ser-433. A Glycyl lysine isopeptide (Lys-Gly) (interchain with G-Cter in SUMO1); alternate cross-link involves residue Lys-467. Lys-467 is covalently cross-linked (Glycyl lysine isopeptide (Lys-Gly) (interchain with G-Cter in SUMO2); alternate). Ser-470, Ser-472, Ser-473, and Ser-477 each carry phosphoserine.

Belongs to the intermediate filament family. Heterotetramer of two type I and two type II keratins. Forms a heterodimer with KRT18. Associates with KRT20. Interacts with PNN. When associated with KRT19, interacts with DMD. Interacts with TCHP. Interacts with APEX1. Interacts with GPER1. Interacts with EPPK1. Interacts with PKP1 and PKP2. In terms of processing, O-glycosylated. O-GlcNAcylation at multiple sites increases solubility, and decreases stability by inducing proteasomal degradation. O-glycosylated (O-GlcNAcylated), in a cell cycle-dependent manner. Expressed in bladder, liver, exocervix and (in very low amounts) esophagus.

The protein localises to the cytoplasm. It localises to the nucleus. Its subcellular location is the nucleoplasm. The protein resides in the nucleus matrix. Functionally, together with KRT19, helps to link the contractile apparatus to dystrophin at the costameres of striated muscle. The polypeptide is Keratin, type II cytoskeletal 8 (KRT8) (Bos taurus (Bovine)).